A 639-amino-acid chain; its full sequence is Ubiquitin-like modifier-activating enzyme ATG7 (639 aa).

A GXGXXG motif motif is present at residues glycine 322–glycine 327. Cysteine 502 functions as the Glycyl thioester intermediate in the catalytic mechanism.

Belongs to the ATG7 family. In terms of assembly, homodimer.

The protein localises to the cytoplasm. The protein resides in the preautophagosomal structure. Functionally, E1-like activating enzyme involved in the 2 ubiquitin-like systems required for cytoplasm to vacuole transport (Cvt) and autophagy. Activates ATG12 for its conjugation with ATG5 and ATG8 for its conjugation with phosphatidylethanolamine. Both systems are needed for the ATG8 association to Cvt vesicles and autophagosomes membranes. Autophagy is essential for maintenance of amino acid levels and protein synthesis under nitrogen starvation. Required for selective autophagic degradation of the nucleus (nucleophagy) as well as for mitophagy which contributes to regulate mitochondrial quantity and quality by eliminating the mitochondria to a basal level to fulfill cellular energy requirements and preventing excess ROS production. Plays a role in the regulation of filamentous growth and chronological longevity. This chain is Ubiquitin-like modifier-activating enzyme ATG7 (APG7), found in Candida albicans (strain SC5314 / ATCC MYA-2876) (Yeast).